Reading from the N-terminus, the 675-residue chain is G-protein-signaling modulator 1 (675 aa).

Residues 1–509 (MAGPAPPVAD…DLLTKFQSSR (509 aa)) are mediates association with membranes. TPR repeat units lie at residues 28 to 61 (CLEL…GTED), 66 to 99 (SAIY…ARTI), 106 to 139 (AKAS…AQEQ), 146 to 181 (ARAL…PPDV), 183 to 202 (ETLC…VKEL), 209 to 242 (GRAY…AKEF), 249 to 282 (RRAY…SRQL), 289 to 322 (AQAC…AQEL), and 329 to 362 (GRAC…SQEI). The interval 364-487 (DRHGELTARM…VRVHVPRTSI (124 aa)) is interaction with STK11/LKB1. The interval 391–412 (SEKPDLAGYEAQGARPKRTQRL) is disordered. A Phosphoserine modification is found at Ser413. Arg421 is subject to Omega-N-methylarginine. Positions 424–442 (LEREQNGDSHHSGDWRGPS) are enriched in basic and acidic residues. A disordered region spans residues 424–492 (LEREQNGDSH…PRTSIPRAPS (69 aa)). Residues Ser445, Ser469, Ser471, Ser492, and Ser493 each carry the phosphoserine modification. Over residues 454-469 (KYQEGPDAERRPREGS) the composition is skewed to basic and acidic residues. One can recognise a GoLoco 1 domain in the interval 495–517 (EECFFDLLTKFQSSRMDDQRCPL). Ser545 and Ser569 each carry phosphoserine. GoLoco domains are found at residues 548–570 (TEEF…RASV), 596–618 (GDDF…RCPP), and 630–652 (DEDF…RVDL). Disordered stretches follow at residues 610 to 630 (RIDD…TMPD) and 644 to 675 (RMDE…PGAS).

This sequence belongs to the GPSM family. As to quaternary structure, interacts with GNAI1, GNAI2 and GNAI3 preferentially in their GDP-bound state. May also interact with GNAO1. Interacts with STK11/LKB1 and MACF1. Interacts with INSC/inscuteable and FRMPD1. In terms of processing, phosphorylation regulates interaction with G(i/o) alpha. As to expression, expressed in intestinal cells.

The protein localises to the cytoplasm. Its subcellular location is the cytosol. It localises to the endoplasmic reticulum membrane. The protein resides in the golgi apparatus membrane. It is found in the cell membrane. In terms of biological role, guanine nucleotide dissociation inhibitor (GDI) which functions as a receptor-independent activator of heterotrimeric G-protein signaling. Keeps G(i/o) alpha subunit in its GDP-bound form thus uncoupling heterotrimeric G-proteins signaling from G protein-coupled receptors. Controls spindle orientation and asymmetric cell fate of cerebral cortical progenitors. May also be involved in macroautophagy in intestinal cells. May play a role in drug addiction. This chain is G-protein-signaling modulator 1 (GPSM1), found in Homo sapiens (Human).